A 198-amino-acid chain; its full sequence is Nascent polypeptide-associated complex subunit alpha (198 aa).

An NAC-A/B domain is found at 48–113 (ITRVVLKRTR…QAAAETGSVS (66 aa)). One can recognise a UBA domain in the interval 159–198 (LEDSDIKLVMEQANVSRNKAINGLKKNDSDVVNTIMDLCK).

The protein belongs to the NAC-alpha family. Part of the nascent polypeptide-associated complex (NAC), consisting of EGD2 and EGD1. NAC associates with ribosomes via EGD1.

Its subcellular location is the cytoplasm. It localises to the nucleus. In terms of biological role, component of the nascent polypeptide-associated complex (NAC), a dynamic component of the ribosomal exit tunnel, protecting the emerging polypeptides from interaction with other cytoplasmic proteins to ensure appropriate nascent protein targeting. The NAC complex also promotes mitochondrial protein import by enhancing productive ribosome interactions with the outer mitochondrial membrane and blocks the inappropriate interaction of ribosomes translating non-secretory nascent polypeptides with translocation sites in the membrane of the endoplasmic reticulum. EGD2 may also be involved in transcription regulation. This Yarrowia lipolytica (strain CLIB 122 / E 150) (Yeast) protein is Nascent polypeptide-associated complex subunit alpha (EGD2).